The sequence spans 613 residues: Dihydroxy-acid dehydratase (613 aa).

D81 lines the Mg(2+) pocket. C122 contributes to the [2Fe-2S] cluster binding site. Residues D123 and K124 each contribute to the Mg(2+) site. N6-carboxylysine is present on K124. A [2Fe-2S] cluster-binding site is contributed by C193. Mg(2+) is bound at residue E489. Catalysis depends on S515, which acts as the Proton acceptor.

This sequence belongs to the IlvD/Edd family. As to quaternary structure, homodimer. The cofactor is [2Fe-2S] cluster. It depends on Mg(2+) as a cofactor.

It catalyses the reaction (2R)-2,3-dihydroxy-3-methylbutanoate = 3-methyl-2-oxobutanoate + H2O. The enzyme catalyses (2R,3R)-2,3-dihydroxy-3-methylpentanoate = (S)-3-methyl-2-oxopentanoate + H2O. Its pathway is amino-acid biosynthesis; L-isoleucine biosynthesis; L-isoleucine from 2-oxobutanoate: step 3/4. The protein operates within amino-acid biosynthesis; L-valine biosynthesis; L-valine from pyruvate: step 3/4. In terms of biological role, functions in the biosynthesis of branched-chain amino acids. Catalyzes the dehydration of (2R,3R)-2,3-dihydroxy-3-methylpentanoate (2,3-dihydroxy-3-methylvalerate) into 2-oxo-3-methylpentanoate (2-oxo-3-methylvalerate) and of (2R)-2,3-dihydroxy-3-methylbutanoate (2,3-dihydroxyisovalerate) into 2-oxo-3-methylbutanoate (2-oxoisovalerate), the penultimate precursor to L-isoleucine and L-valine, respectively. The protein is Dihydroxy-acid dehydratase of Pseudomonas putida (strain GB-1).